The chain runs to 122 residues: MKAERSDDLKLKALKRGHLAEYRAALCLILKGYRIVAMRYRTRLGEIDIIARRGDLIACVEVKARRSFDDAIFAVSSTAQRRIRAASEVWLSRQGDFHRLSLRYDIVAVMPWRWPRHLTDAF.

Belongs to the UPF0102 family.

This Sinorhizobium medicae (strain WSM419) (Ensifer medicae) protein is UPF0102 protein Smed_3545.